The primary structure comprises 475 residues: NADH-quinone oxidoreductase subunit N (475 aa).

14 consecutive transmembrane segments (helical) span residues 5–25 (LALPEIVLALCGLAILVFGVV), 32–52 (FLSCSMLTIGAFVLTGFLVVM), 71–91 (FMKILSLAGGAFATMLTVGYA), 99–119 (FEFPVLLLFSTLGAMMMASSE), 121–141 (LMTLFIGLELSSLAIYILCAF), 155–175 (YFVLGSLASGLLLYGSSLVYG), 193–213 (STAVPMGLMFGIVFMLAGLTF), 232–252 (PTSVTAYMAGAPKFAAFALLL), 266–286 (WQILVEGVSMLSMLFGSLAAI), 294–314 (LMAYSSIGHMGYALMGLCAGT), 322–342 (LVYLTTYLLMNVGAFAVIIAM), 366–386 (ATAMAIFMFSMAGAPPLAGFF), 389–409 (MMVFYAAINAHLFGLAAIGVV), and 439–459 (LSLSFVSVGMGIATTGFLLVL).

Belongs to the complex I subunit 2 family. In terms of assembly, NDH-1 is composed of 14 different subunits. Subunits NuoA, H, J, K, L, M, N constitute the membrane sector of the complex.

Its subcellular location is the cell inner membrane. It carries out the reaction a quinone + NADH + 5 H(+)(in) = a quinol + NAD(+) + 4 H(+)(out). NDH-1 shuttles electrons from NADH, via FMN and iron-sulfur (Fe-S) centers, to quinones in the respiratory chain. The immediate electron acceptor for the enzyme in this species is believed to be ubiquinone. Couples the redox reaction to proton translocation (for every two electrons transferred, four hydrogen ions are translocated across the cytoplasmic membrane), and thus conserves the redox energy in a proton gradient. In Gluconacetobacter diazotrophicus (strain ATCC 49037 / DSM 5601 / CCUG 37298 / CIP 103539 / LMG 7603 / PAl5), this protein is NADH-quinone oxidoreductase subunit N.